A 232-amino-acid polypeptide reads, in one-letter code: LexA repressor (232 aa).

Residues 26-46 constitute a DNA-binding region (H-T-H motif); that stretch reads FDEMKDALDLRSKSGIHRLIT. Catalysis depends on for autocatalytic cleavage activity residues serine 153 and lysine 191.

This sequence belongs to the peptidase S24 family. As to quaternary structure, homodimer.

The enzyme catalyses Hydrolysis of Ala-|-Gly bond in repressor LexA.. Functionally, represses a number of genes involved in the response to DNA damage (SOS response), including recA and lexA. In the presence of single-stranded DNA, RecA interacts with LexA causing an autocatalytic cleavage which disrupts the DNA-binding part of LexA, leading to derepression of the SOS regulon and eventually DNA repair. The chain is LexA repressor from Afipia carboxidovorans (strain ATCC 49405 / DSM 1227 / KCTC 32145 / OM5) (Oligotropha carboxidovorans).